Here is a 160-residue protein sequence, read N- to C-terminus: Small ribosomal subunit protein uS7 (160 aa).

Belongs to the universal ribosomal protein uS7 family. In terms of assembly, part of the 30S ribosomal subunit. Contacts proteins S9 and S11.

Its function is as follows. One of the primary rRNA binding proteins, it binds directly to 16S rRNA where it nucleates assembly of the head domain of the 30S subunit. Is located at the subunit interface close to the decoding center, probably blocks exit of the E-site tRNA. This chain is Small ribosomal subunit protein uS7, found in Ehrlichia canis (strain Jake).